The following is a 149-amino-acid chain: SsrA-binding protein (149 aa).

Residues K123–E149 are disordered.

It belongs to the SmpB family.

It is found in the cytoplasm. Functionally, required for rescue of stalled ribosomes mediated by trans-translation. Binds to transfer-messenger RNA (tmRNA), required for stable association of tmRNA with ribosomes. tmRNA and SmpB together mimic tRNA shape, replacing the anticodon stem-loop with SmpB. tmRNA is encoded by the ssrA gene; the 2 termini fold to resemble tRNA(Ala) and it encodes a 'tag peptide', a short internal open reading frame. During trans-translation Ala-aminoacylated tmRNA acts like a tRNA, entering the A-site of stalled ribosomes, displacing the stalled mRNA. The ribosome then switches to translate the ORF on the tmRNA; the nascent peptide is terminated with the 'tag peptide' encoded by the tmRNA and targeted for degradation. The ribosome is freed to recommence translation, which seems to be the essential function of trans-translation. The chain is SsrA-binding protein from Cupriavidus taiwanensis (strain DSM 17343 / BCRC 17206 / CCUG 44338 / CIP 107171 / LMG 19424 / R1) (Ralstonia taiwanensis (strain LMG 19424)).